Here is a 570-residue protein sequence, read N- to C-terminus: Proline--tRNA ligase (570 aa).

Belongs to the class-II aminoacyl-tRNA synthetase family. ProS type 1 subfamily. In terms of assembly, homodimer.

The protein localises to the cytoplasm. The enzyme catalyses tRNA(Pro) + L-proline + ATP = L-prolyl-tRNA(Pro) + AMP + diphosphate. Catalyzes the attachment of proline to tRNA(Pro) in a two-step reaction: proline is first activated by ATP to form Pro-AMP and then transferred to the acceptor end of tRNA(Pro). As ProRS can inadvertently accommodate and process non-cognate amino acids such as alanine and cysteine, to avoid such errors it has two additional distinct editing activities against alanine. One activity is designated as 'pretransfer' editing and involves the tRNA(Pro)-independent hydrolysis of activated Ala-AMP. The other activity is designated 'posttransfer' editing and involves deacylation of mischarged Ala-tRNA(Pro). The misacylated Cys-tRNA(Pro) is not edited by ProRS. This is Proline--tRNA ligase from Wolinella succinogenes (strain ATCC 29543 / DSM 1740 / CCUG 13145 / JCM 31913 / LMG 7466 / NCTC 11488 / FDC 602W) (Vibrio succinogenes).